A 269-amino-acid polypeptide reads, in one-letter code: MEDKNSVIVFKNVSFQYQSDASFTLKDVSFNIPKGQWTSIVGHNGSGKSTIAKLMIGIEKVKSGEIFYNNQAITDDNFEKLRKDIGIVFQNPDNQFVGSIVKYDVAFGLENHAVPHDEMHRRVSEALKQVDMLERADYEPNALSGGQKQRVAIASVLALNPSVIILDEATSMLDPDARQNLLDLVRKVKSEHNITIISITHDLSEAMEADHVIVMNKGTVYKEGTAIEIFDHAEGLTTIGLDLPFPIKINQMLGHQTSFLTYEGLVDQL.

One can recognise an ABC transporter domain in the interval 8–242; that stretch reads IVFKNVSFQY…AEGLTTIGLD (235 aa). ATP is bound at residue 42-49; it reads GHNGSGKS.

This sequence belongs to the ABC transporter superfamily. Energy-coupling factor EcfA family. Forms a stable energy-coupling factor (ECF) transporter complex composed of 2 membrane-embedded substrate-binding proteins (S component), 2 ATP-binding proteins (A component) and 2 transmembrane proteins (T component).

The protein localises to the cell membrane. ATP-binding (A) component of a common energy-coupling factor (ECF) ABC-transporter complex. Unlike classic ABC transporters this ECF transporter provides the energy necessary to transport a number of different substrates. The chain is Energy-coupling factor transporter ATP-binding protein EcfA1 from Staphylococcus aureus (strain bovine RF122 / ET3-1).